The primary structure comprises 170 residues: Putative 5'(3')-deoxyribonucleotidase (170 aa).

The active-site Nucleophile is aspartate 28. The Mg(2+) site is built by aspartate 28, aspartate 30, and aspartate 134. Catalysis depends on aspartate 30, which acts as the Proton donor.

The protein belongs to the 5'(3')-deoxyribonucleotidase family. It depends on Mg(2+) as a cofactor.

Dephosphorylates the 5' and 2'(3')-phosphates of deoxyribonucleotides. The chain is Putative 5'(3')-deoxyribonucleotidase from Vibrio parahaemolyticus (KVP40).